The following is a 343-amino-acid chain: Phosphate acyltransferase (343 aa).

The protein belongs to the PlsX family. In terms of assembly, homodimer. Probably interacts with PlsY.

It is found in the cytoplasm. The catalysed reaction is a fatty acyl-[ACP] + phosphate = an acyl phosphate + holo-[ACP]. The protein operates within lipid metabolism; phospholipid metabolism. Catalyzes the reversible formation of acyl-phosphate (acyl-PO(4)) from acyl-[acyl-carrier-protein] (acyl-ACP). This enzyme utilizes acyl-ACP as fatty acyl donor, but not acyl-CoA. The protein is Phosphate acyltransferase of Coxiella burnetii (strain Dugway 5J108-111).